The primary structure comprises 539 residues: Probable K(+)/H(+) antiporter subunit D (539 aa).

Transmembrane regions (helical) follow at residues 4 to 23 (WLDH…AAVL), 36 to 58 (AIGF…LAAA), 78 to 100 (FGIV…GLAL), 113 to 135 (AGHH…FLTG), 140 to 162 (LFVF…SGPL), 175 to 197 (LAAS…TLNM), 217 to 239 (MGSA…SFWL), 251 to 273 (AGVF…LLVF), 283 to 305 (FGQE…GVLA), 312 to 331 (LAGY…VGLG), 335 to 357 (MLAG…FLLI), 400 to 422 (VLGL…SGFI), 442 to 464 (AMSA…AMIA), and 484 to 506 (VVVI…SLQA).

It belongs to the CPA3 antiporters (TC 2.A.63) subunit D family. May form a hetero-oligomeric complex that consists of six subunits: PhaAB, PhaC, PhaD, PhaE, PhaF and PhaG.

It localises to the cell membrane. Functionally, part of a K(+) efflux system which is required for the adaptation of R.meliloti to alkaline pH as well as for the infection process during symbiotic nodule development. The polypeptide is Probable K(+)/H(+) antiporter subunit D (phaD) (Rhizobium meliloti (strain 1021) (Ensifer meliloti)).